We begin with the raw amino-acid sequence, 152 residues long: Ribosome maturation factor RimP (152 aa).

The protein belongs to the RimP family.

The protein resides in the cytoplasm. Functionally, required for maturation of 30S ribosomal subunits. The chain is Ribosome maturation factor RimP from Photorhabdus laumondii subsp. laumondii (strain DSM 15139 / CIP 105565 / TT01) (Photorhabdus luminescens subsp. laumondii).